An 82-amino-acid polypeptide reads, in one-letter code: Toxin Tpa7 (82 aa).

The first 20 residues, 1-20 (MKGMILLISCLMLIEVVVEC), serve as a signal peptide directing secretion. An LCN-type CS-alpha/beta domain is found at 21-82 (KEGYPLDTLN…KIWDLKKNKC (62 aa)). Intrachain disulfides connect Cys32–Cys82, Cys36–Cys58, Cys44–Cys63, and Cys48–Cys65.

This sequence belongs to the long (4 C-C) scorpion toxin superfamily. Sodium channel inhibitor family. Beta subfamily. In terms of tissue distribution, expressed by the venom gland.

Its subcellular location is the secreted. Its function is as follows. Beta toxins bind voltage-independently at site-4 of sodium channels (Nav) and shift the voltage of activation toward more negative potentials thereby affecting sodium channel activation and promoting spontaneous and repetitive firing. The sequence is that of Toxin Tpa7 from Tityus pachyurus (Colombian scorpion).